The primary structure comprises 406 residues: Argininosuccinate synthase (406 aa).

ATP contacts are provided by residues 13–21 (AYSGGLDTS) and alanine 40. 2 residues coordinate L-citrulline: tyrosine 91 and serine 96. ATP is bound at residue glycine 121. Positions 123, 127, and 128 each coordinate L-aspartate. Asparagine 127 lines the L-citrulline pocket. L-citrulline is bound by residues arginine 131, serine 182, serine 191, glutamate 267, and tyrosine 279.

The protein belongs to the argininosuccinate synthase family. Type 1 subfamily. As to quaternary structure, homotetramer.

Its subcellular location is the cytoplasm. It carries out the reaction L-citrulline + L-aspartate + ATP = 2-(N(omega)-L-arginino)succinate + AMP + diphosphate + H(+). It functions in the pathway amino-acid biosynthesis; L-arginine biosynthesis; L-arginine from L-ornithine and carbamoyl phosphate: step 2/3. This is Argininosuccinate synthase from Brucella suis biovar 1 (strain 1330).